The following is a 1340-amino-acid chain: Lysine-specific demethylase ELF6 (1340 aa).

In terms of domain architecture, JmjN spans 16–57 (APVFRPTDTEFADPIAYISKIEKEASAFGICKIIPPLPKPSK). Positions 195–245 (QRKRRGRGFYQRKTENNDPSGKNGEKSSPEVEKAPLASTSLSSQDSSKQKN) are disordered. Positions 217 to 227 (NGEKSSPEVEK) are enriched in basic and acidic residues. One can recognise a JmjC domain in the interval 262-428 (NSSWNLQMIA…VAKEAAVRRA (167 aa)). Fe cation-binding residues include His-305, Glu-307, and His-396. Residues 818-825 (GKKEEKII) carry the Nuclear localization signal 1 motif. The tract at residues 1092–1225 (GEPLESSDIL…SRQQEVPTTT (134 aa)) is disordered. The span at 1099–1115 (DILSSSNGDEASSNGLQ) shows a compositional bias: polar residues. The span at 1124–1133 (ESEVSSSENT) shows a compositional bias: low complexity. Residues 1188–1201 (SLKHTETSDEEKKP) are compositionally biased toward basic and acidic residues. The segment covering 1215–1225 (GSRQQEVPTTT) has biased composition (polar residues). 4 C2H2-type zinc fingers span residues 1228–1250 (NRCY…THKR), 1251–1275 (NRCT…QRVH), 1281–1305 (FECS…LRLH), and 1311–1337 (YICK…KTMH). Zn(2+) contacts are provided by Cys-1230, Cys-1235, His-1248, Cys-1253, Cys-1258, His-1265, His-1271, His-1275, Cys-1283, Cys-1288, His-1301, His-1305, Cys-1313, Cys-1318, His-1331, and His-1337. Residues 1248–1255 (HKRNRCTH) carry the Nuclear localization signal 2 motif. The tract at residues 1260 to 1333 (KKFRAHKYLV…FVSDYSRHRR (74 aa)) is DNA-binding.

It belongs to the JHDM3 histone demethylase family. Interacts with BZR2 (via N-terminus). As to expression, expressed at low levels in seedlings, cotyledons and leaves. Detected in inflorescences, stems, roots and siliques but not in shoot apical meristems or root tips. Accumulates in flowers and embryos.

The protein resides in the nucleus. It catalyses the reaction N(6),N(6),N(6)-trimethyl-L-lysyl(27)-[histone H3] + 2-oxoglutarate + O2 = N(6),N(6)-dimethyl-L-lysyl(27)-[histone H3] + formaldehyde + succinate + CO2. The enzyme catalyses N(6),N(6)-dimethyl-L-lysyl(27)-[histone H3] + 2-oxoglutarate + O2 = N(6)-methyl-L-lysyl(27)-[histone H3] + formaldehyde + succinate + CO2. Histone demethylase that demethylates 'Lys-27' (H3K27me) of histone H3, thus acting as a positive regulator of gene expression. Demethylates tri-methylated (H3K27me3) and di-methylated (H3K27me2) H3K27me. Inactive on H3K27me1, H3K4me3, H3K9me2 and H3K36me3. Acts as a repressor of the photoperiodic flowering pathway and of FT. May also be active on H3K4me. Binds around the transcription start site of the FT locus. Required for epigenetic reprogramming by resetting the expression of the floral repressor FLC locus, thus aluviating cold-mediated FLC epigenetically silencing occurring during vernalization and preventing inapropriate epigenetic states inheritence. Functionally, together with REF6, required for H3K27me3 resetting (especially in constitutive heterochromatin within the pericentromeric regions) and transgenerational inheritance of histone marks, thus acting in safeguarding genome and epigenome integrity during sexual reproduction. In Arabidopsis thaliana (Mouse-ear cress), this protein is Lysine-specific demethylase ELF6.